The chain runs to 103 residues: Histone H4 (103 aa).

Gly residues predominate over residues 1-14 (MSGRGKGGKGLGKG). The tract at residues 1-20 (MSGRGKGGKGLGKGGAKRHR) is disordered. S2 bears the N-acetylserine mark. An N6-acetyl-N6-methyllysine; alternate mark is found at K6 and K13. K17 carries the N6-acetyllysine modification. Residues 17–21 (KRHRK) mediate DNA binding. N6-methyllysine is present on K21.

The protein belongs to the histone H4 family. The nucleosome is a histone octamer containing two molecules each of H2A, H2B, H3 and H4 assembled in one H3-H4 heterotetramer and two H2A-H2B heterodimers. The octamer wraps approximately 147 bp of DNA.

It is found in the nucleus. It localises to the chromosome. Functionally, core component of nucleosome. Nucleosomes wrap and compact DNA into chromatin, limiting DNA accessibility to the cellular machineries which require DNA as a template. Histones thereby play a central role in transcription regulation, DNA repair, DNA replication and chromosomal stability. DNA accessibility is regulated via a complex set of post-translational modifications of histones, also called histone code, and nucleosome remodeling. The sequence is that of Histone H4 from Ascaris suum (Pig roundworm).